The following is a 383-amino-acid chain: S-adenosylmethionine synthase (383 aa).

Histidine 15 contributes to the ATP binding site. Aspartate 17 is a binding site for Mg(2+). Residue glutamate 43 coordinates K(+). 2 residues coordinate L-methionine: glutamate 56 and glutamine 99. The flexible loop stretch occupies residues 99–109; the sequence is QSPDINQGVDR. Residues 164–166, 230–231, aspartate 239, 245–246, alanine 262, and lysine 266 each bind ATP; these read DAK, RF, and RK. Position 239 (aspartate 239) interacts with L-methionine. Position 270 (lysine 270) interacts with L-methionine.

This sequence belongs to the AdoMet synthase family. Homotetramer; dimer of dimers. Mg(2+) is required as a cofactor. It depends on K(+) as a cofactor.

The protein resides in the cytoplasm. The enzyme catalyses L-methionine + ATP + H2O = S-adenosyl-L-methionine + phosphate + diphosphate. It participates in amino-acid biosynthesis; S-adenosyl-L-methionine biosynthesis; S-adenosyl-L-methionine from L-methionine: step 1/1. In terms of biological role, catalyzes the formation of S-adenosylmethionine (AdoMet) from methionine and ATP. The overall synthetic reaction is composed of two sequential steps, AdoMet formation and the subsequent tripolyphosphate hydrolysis which occurs prior to release of AdoMet from the enzyme. The chain is S-adenosylmethionine synthase from Shewanella denitrificans (strain OS217 / ATCC BAA-1090 / DSM 15013).